The following is a 130-amino-acid chain: Small ribosomal subunit protein uS8 (130 aa).

It belongs to the universal ribosomal protein uS8 family. As to quaternary structure, part of the 30S ribosomal subunit.

One of the primary rRNA binding proteins, it binds directly to 16S rRNA central domain where it helps coordinate assembly of the platform of the 30S subunit. In Methanococcus maripaludis (strain C5 / ATCC BAA-1333), this protein is Small ribosomal subunit protein uS8.